A 302-amino-acid chain; its full sequence is DDRGK domain-containing protein 1 (302 aa).

The helical transmembrane segment at 1–21 threads the bilayer; it reads MDPLLLGSVGVLVLAVTLIIW. Over 22–302 the chain is Cytoplasmic; the sequence is RLLKLQWDEK…IRLETPSAAE (281 aa). Residues 101–178 are disordered; sequence EYDEDGKKIG…EREEKERKEH (78 aa). Residues 118-178 are compositionally biased toward basic and acidic residues; the sequence is QAKEEKRQMR…EREEKERKEH (61 aa).

Belongs to the DDRGK1 family.

The protein localises to the endoplasmic reticulum membrane. Functionally, substrate adapter for ufmylation, the covalent attachment of the ubiquitin-like modifier ufm-1 to substrate proteins. The chain is DDRGK domain-containing protein 1 from Caenorhabditis elegans.